A 290-amino-acid chain; its full sequence is Glycine--tRNA ligase alpha subunit (290 aa).

Belongs to the class-II aminoacyl-tRNA synthetase family. Tetramer of two alpha and two beta subunits.

The protein localises to the cytoplasm. The enzyme catalyses tRNA(Gly) + glycine + ATP = glycyl-tRNA(Gly) + AMP + diphosphate. The protein is Glycine--tRNA ligase alpha subunit of Nitratiruptor sp. (strain SB155-2).